The sequence spans 157 residues: Transcriptional repressor NrdR (157 aa).

The segment at 3-34 is a zinc-finger region; the sequence is CPFCGFADTRVIDSRLGKEGNNIRRRRECSQC. Positions 49–139 constitute an ATP-cone domain; the sequence is PLIIKKDARR…VYRQFKDINE (91 aa).

This sequence belongs to the NrdR family. Zn(2+) is required as a cofactor.

Its function is as follows. Negatively regulates transcription of bacterial ribonucleotide reductase nrd genes and operons by binding to NrdR-boxes. This chain is Transcriptional repressor NrdR, found in Syntrophotalea carbinolica (strain DSM 2380 / NBRC 103641 / GraBd1) (Pelobacter carbinolicus).